The primary structure comprises 638 residues: Threonine--tRNA ligase (638 aa).

Residues 1–61 (MPIITLPDGS…NSDSKVVIIT (61 aa)) enclose the TGS domain. A catalytic region spans residues 242–533 (DHRKLGKKHS…LIEQYEAKFP (292 aa)). Zn(2+)-binding residues include Cys-333, His-384, and His-510.

Belongs to the class-II aminoacyl-tRNA synthetase family. Homodimer. Zn(2+) serves as cofactor.

It localises to the cytoplasm. It catalyses the reaction tRNA(Thr) + L-threonine + ATP = L-threonyl-tRNA(Thr) + AMP + diphosphate + H(+). Its function is as follows. Catalyzes the attachment of threonine to tRNA(Thr) in a two-step reaction: L-threonine is first activated by ATP to form Thr-AMP and then transferred to the acceptor end of tRNA(Thr). Also edits incorrectly charged L-seryl-tRNA(Thr). The polypeptide is Threonine--tRNA ligase (Prochlorococcus marinus (strain MIT 9215)).